Consider the following 324-residue polypeptide: Uric acid degradation bifunctional protein TTL (324 aa).

Ala2 is subject to N-acetylalanine. The segment at 2–29 (AMEIGEDEWKVCCGSSEFAKQMSTSGPL) is required for BRI1-binding. The tract at residues 2–161 (AMEIGEDEWK…LRMAKLFSDK (160 aa)) is OHCU decarboxylase. Catalysis depends on His58, which acts as the Proton donor; for OHCU decarboxylase activity. Residues His58, Pro59, Glu80, Phe111, Ile113, and Ala115 each coordinate (S)-allantoin. Residues 178–324 (KPQDRLRIIG…PFSFSTYRGS (147 aa)) form an HIU hydrolase region. An Internal peroxisomal targeting signal (PTS2) motif is present at residues 182–190 (RLRIIGGHL).

The protein in the N-terminal section; belongs to the OHCU decarboxylase family. It in the C-terminal section; belongs to the transthyretin family. 5-hydroxyisourate hydrolase subfamily. As to quaternary structure, homodimer. Forms tetramers. Interacts with BRI1 in a kinase-dependent manner. Interacts with B1L. Post-translationally, phosphorylated by BRI1 in vitro. In terms of tissue distribution, expressed ubiquitously with highest levels in flowers buds and elongating inflorescences. As to expression, mainly expressed in stems and leaves, and, to a lower extent, in flowers, flower buds and seedlings. Strongly expressed in flower buds and leaves, to a lower extent in stems, and at low levels in seedlings and flowers.

Its subcellular location is the cell membrane. The protein localises to the peroxisome. It localises to the cytoplasm. It is found in the cytosol. The catalysed reaction is 5-hydroxyisourate + H2O = 5-hydroxy-2-oxo-4-ureido-2,5-dihydro-1H-imidazole-5-carboxylate + H(+). It catalyses the reaction 5-hydroxy-2-oxo-4-ureido-2,5-dihydro-1H-imidazole-5-carboxylate + H(+) = (S)-allantoin + CO2. It participates in purine metabolism; urate degradation; (S)-allantoin from urate: step 2/3. The protein operates within purine metabolism; urate degradation; (S)-allantoin from urate: step 3/3. In terms of biological role, involved in the last two steps of the degradation of uric acid, i.e. the hydrolysis of 5-hydroxyisourate (HIU) to 2-oxo-4-hydroxy-4-carboxy-5-ureidoimidazoline (OHCU) and its stereoselective decarboxylation to (S)-allantoin, a major ureide compound. Might function as a negative regulator to modulate brassinosteroid-mediated plant growth. Together with B1L, prevents plant growth and development, but by opposition to B1L, negatively regulates cold tolerance, probably in a brassinosteroid (BR) and allantoin-dependent manner. The polypeptide is Uric acid degradation bifunctional protein TTL (Arabidopsis thaliana (Mouse-ear cress)).